A 156-amino-acid polypeptide reads, in one-letter code: Ribosomal RNA large subunit methyltransferase H (156 aa).

Residues Leu-73, Gly-104, and 123–128 (LSAMTL) each bind S-adenosyl-L-methionine.

The protein belongs to the RNA methyltransferase RlmH family. As to quaternary structure, homodimer.

It is found in the cytoplasm. The enzyme catalyses pseudouridine(1915) in 23S rRNA + S-adenosyl-L-methionine = N(3)-methylpseudouridine(1915) in 23S rRNA + S-adenosyl-L-homocysteine + H(+). Its function is as follows. Specifically methylates the pseudouridine at position 1915 (m3Psi1915) in 23S rRNA. The chain is Ribosomal RNA large subunit methyltransferase H from Laribacter hongkongensis (strain HLHK9).